A 371-amino-acid polypeptide reads, in one-letter code: Protein-tyrosine sulfotransferase 2 (371 aa).

Topologically, residues 1–8 (MRVTMRRV) are cytoplasmic. The helical; Signal-anchor for type II membrane protein transmembrane segment at 9–25 (LLAVGSVVALMVTLHLG) threads the bilayer. The Lumenal portion of the chain corresponds to 26–371 (QQVLECQHVL…QVTQNTSSSH (346 aa)). 76-80 (RSGTT) is a binding site for 3'-phosphoadenylyl sulfate. C94 and C154 are disulfide-bonded. E97 serves as the catalytic Proton donor/acceptor. An interaction with peptide substrate region spans residues 99–103 (RIIPR). R181, S189, and R193 together coordinate 3'-phosphoadenylyl sulfate. C223 and C231 form a disulfide bridge. 3'-phosphoadenylyl sulfate contacts are provided by residues Y236, 283-292 (STDQVIKPVN), and K298. Residues N341 and N366 are each glycosylated (N-linked (GlcNAc...) asparagine).

It belongs to the protein sulfotransferase family.

The protein resides in the golgi apparatus membrane. It carries out the reaction L-tyrosyl-[protein] + 3'-phosphoadenylyl sulfate = O-sulfo-L-tyrosine-[protein] + adenosine 3',5'-bisphosphate + H(+). In terms of biological role, catalyzes the O-sulfation of tyrosine residues within acidic motifs of polypeptides, using 3'-phosphoadenylyl sulfate (PAPS) as cosubstrate. The polypeptide is Protein-tyrosine sulfotransferase 2 (TPST2) (Gallus gallus (Chicken)).